The primary structure comprises 420 residues: MDKLVIEGGYPLSGEVVVSGAKNAALPILCAGLLSAQPVHLENVPDLQDVRTMLKLLGQMGVQIESGDGRVSLNASKVDNLVAPYEMVKTMRASILVLGPLVARFGHARVSLPGGCAIGARPVDQHIKGLQAMGAEITIEHGFIEARAKRLKGTRIVTDMITVTGTENLLMAAVLAEGETVIENAAREPEVGDLAHLLVEMGAKIEGIGTDRLVIQGVDKLHGAKHTVIPDRIEAGTFLCAVAAAGGDVTLRKVRPLILEAVTEKLREAGVTVEEGDDWMRVRMNKRPNAVTFRTSEYPAFPTDMQAQFMALNTIATGTSQVVETIFENRFMHVQELNRLGANITIDGNTALVTGVEQLSGAKVMATDLRASASLVIAALRADGETLIDRIYHLDRGYDRMETKLTALGAKVRRVSGSQA.

Residue 22–23 (KN) participates in phosphoenolpyruvate binding. Arginine 92 is a UDP-N-acetyl-alpha-D-glucosamine binding site. Residue cysteine 116 is the Proton donor of the active site. Cysteine 116 carries the post-translational modification 2-(S-cysteinyl)pyruvic acid O-phosphothioketal. UDP-N-acetyl-alpha-D-glucosamine-binding positions include 121-125 (RPVDQ), aspartate 304, and isoleucine 326.

It belongs to the EPSP synthase family. MurA subfamily.

The protein resides in the cytoplasm. The enzyme catalyses phosphoenolpyruvate + UDP-N-acetyl-alpha-D-glucosamine = UDP-N-acetyl-3-O-(1-carboxyvinyl)-alpha-D-glucosamine + phosphate. It functions in the pathway cell wall biogenesis; peptidoglycan biosynthesis. Cell wall formation. Adds enolpyruvyl to UDP-N-acetylglucosamine. In Paraburkholderia xenovorans (strain LB400), this protein is UDP-N-acetylglucosamine 1-carboxyvinyltransferase.